The sequence spans 213 residues: Methylthioribulose-1-phosphate dehydratase (213 aa).

H97 and H99 together coordinate Zn(2+).

This sequence belongs to the aldolase class II family. MtnB subfamily. In terms of assembly, homotetramer. Zn(2+) is required as a cofactor.

It carries out the reaction 5-(methylsulfanyl)-D-ribulose 1-phosphate = 5-methylsulfanyl-2,3-dioxopentyl phosphate + H2O. It functions in the pathway amino-acid biosynthesis; L-methionine biosynthesis via salvage pathway; L-methionine from S-methyl-5-thio-alpha-D-ribose 1-phosphate: step 2/6. Catalyzes the dehydration of methylthioribulose-1-phosphate (MTRu-1-P) into 2,3-diketo-5-methylthiopentyl-1-phosphate (DK-MTP-1-P). This is Methylthioribulose-1-phosphate dehydratase from Geobacillus sp. (strain WCH70).